A 383-amino-acid polypeptide reads, in one-letter code: uncharacterized protein (383 aa).

The next 2 helical transmembrane spans lie at 49 to 69 (VDLL…GCVA) and 347 to 367 (LLGG…PVAG).

This sequence to M.tuberculosis Rv0874c.

Its subcellular location is the cell membrane. This is an uncharacterized protein from Mycobacterium tuberculosis (strain CDC 1551 / Oshkosh).